The sequence spans 320 residues: Atrochrysone carboxyl ACP thioesterase (320 aa).

Positions 103, 105, 107, and 108 each coordinate Zn(2+). Residue Asp-107 is the Proton donor/acceptor of the active site.

It belongs to the metallo-beta-lactamase superfamily. Zn(2+) is required as a cofactor.

It carries out the reaction atrochrysone carboxyl-[ACP] + H2O = atrochrysone carboxylate + holo-[ACP] + H(+). The protein operates within secondary metabolite biosynthesis. Functionally, atrochrysone carboxyl ACP thioesterase; part of the gene cluster that mediates the biosynthesis of geodin, an intermediate in the biosynthesis of other natural products. The pathway begins with the synthesis of atrochrysone thioester by the polyketide synthase (PKS) gedC. The atrochrysone carboxyl ACP thioesterase gedB then breaks the thioester bond and releases the atrochrysone carboxylic acid from gedC. The atrochrysone carboxylic acid is then converted to atrochrysone which is further transformed into emodinanthrone. The next step is performed by the emodinanthrone oxygenase gedH that catalyzes the oxidation of emodinanthrone to emodin. Emodin O-methyltransferase encoded probably by gedA then catalyzes methylation of the 8-hydroxy group of emodin to form questin. Ring cleavage of questin by questin oxidase gedK leads to desmethylsulochrin via several intermediates including questin epoxide. Another methylation step probably catalyzed by methyltransferase gedG leads to the formation of sulochrin which is further converted to dihydrogeodin by the sulochrin halogenase gedL. Finally, the dihydrogeodin oxidase gedJ catalyzes the stereospecific phenol oxidative coupling reaction converting dihydrogeodin to geodin. The polypeptide is Atrochrysone carboxyl ACP thioesterase (Aspergillus terreus (strain NIH 2624 / FGSC A1156)).